We begin with the raw amino-acid sequence, 166 residues long: Fer3-like protein (166 aa).

Positions 57–88 (FEEGDPEEEECEVDQGDGEEEEEEERGRGVSL) are disordered. Residues 60-80 (GDPEEEECEVDQGDGEEEEEE) show a composition bias toward acidic residues. Residues 101-153 (AQRQAANIRERKRMFNLNEAFDQLRRKVPTFAYEKRLSRIETLRLAIVYISFM) form the bHLH domain.

In terms of assembly, heterodimer with TCF3/E12. Interacts with the bHLH domain of TCF3/E12.

Its subcellular location is the nucleus. In terms of biological role, transcription factor that binds to the E-box and functions as inhibitor of transcription. DNA binding requires dimerization with an E protein. Inhibits transcription activation by ASCL1/MASH1 by sequestering E proteins. The sequence is that of Fer3-like protein (FERD3L) from Homo sapiens (Human).